Here is a 155-residue protein sequence, read N- to C-terminus: Riboflavin synthase (155 aa).

Belongs to the DMRL synthase family.

The catalysed reaction is 2 6,7-dimethyl-8-(1-D-ribityl)lumazine + H(+) = 5-amino-6-(D-ribitylamino)uracil + riboflavin. The protein operates within cofactor biosynthesis; riboflavin biosynthesis; riboflavin from 2-hydroxy-3-oxobutyl phosphate and 5-amino-6-(D-ribitylamino)uracil: step 2/2. In Aeropyrum pernix (strain ATCC 700893 / DSM 11879 / JCM 9820 / NBRC 100138 / K1), this protein is Riboflavin synthase (ribC).